The sequence spans 543 residues: CTP synthase (543 aa).

The tract at residues 1 to 265 is amidoligase domain; that stretch reads MTRFVFITGG…DQEVLRYFDL (265 aa). Residue Ser13 coordinates CTP. Residue Ser13 coordinates UTP. 14 to 19 serves as a coordination point for ATP; sequence SLGKGI. An L-glutamine-binding site is contributed by Tyr54. Asp71 contacts ATP. Residues Asp71 and Glu139 each contribute to the Mg(2+) site. CTP-binding positions include 146–148, 186–191, and Lys222; these read DIE and KTKPTQ. UTP-binding positions include 186 to 191 and Lys222; that span reads KTKPTQ. The 252-residue stretch at 291-542 folds into the Glutamine amidotransferase type-1 domain; the sequence is RVAIVGKYTA…IAAAVKEAHR (252 aa). Gly354 contacts L-glutamine. Catalysis depends on Cys381, which acts as the Nucleophile; for glutamine hydrolysis. L-glutamine is bound by residues 382–385, Glu405, and Arg470; that span reads FGMQ. Catalysis depends on residues His515 and Glu517.

This sequence belongs to the CTP synthase family. As to quaternary structure, homotetramer.

The catalysed reaction is UTP + L-glutamine + ATP + H2O = CTP + L-glutamate + ADP + phosphate + 2 H(+). It catalyses the reaction L-glutamine + H2O = L-glutamate + NH4(+). The enzyme catalyses UTP + NH4(+) + ATP = CTP + ADP + phosphate + 2 H(+). The protein operates within pyrimidine metabolism; CTP biosynthesis via de novo pathway; CTP from UDP: step 2/2. Allosterically activated by GTP, when glutamine is the substrate; GTP has no effect on the reaction when ammonia is the substrate. The allosteric effector GTP functions by stabilizing the protein conformation that binds the tetrahedral intermediate(s) formed during glutamine hydrolysis. Inhibited by the product CTP, via allosteric rather than competitive inhibition. In terms of biological role, catalyzes the ATP-dependent amination of UTP to CTP with either L-glutamine or ammonia as the source of nitrogen. Regulates intracellular CTP levels through interactions with the four ribonucleotide triphosphates. This is CTP synthase from Gluconobacter oxydans (strain 621H) (Gluconobacter suboxydans).